The following is a 907-amino-acid chain: Epidermal growth factor receptor substrate 15-like 1 (907 aa).

Alanine 2 carries the N-acetylalanine modification. An EH 1 domain is found at 15–104; the sequence is GNPLYESYYK…SLTMPPPKFH (90 aa). An interaction with DAB2 region spans residues 15 to 368; the sequence is GNPLYESYYK…PSERGTPIPD (354 aa). In terms of domain architecture, EF-hand 1 spans 48–83; sequence LSDIILGKIWDLADPEGKGFLDKQGFYVALRLVACA. At tyrosine 74 the chain carries Phosphotyrosine. Phosphoserine occurs at positions 107 and 108. The 89-residue stretch at 127–215 folds into the EH 2 domain; sequence EKAKFDGIFE…PPLIPPSKRK (89 aa). The region spanning 159–194 is the EF-hand 2 domain; that stretch reads LPLDVLGRVWDLSDIDKDGHLDRDEFAVAMHLVYRA. Residues aspartate 172, aspartate 174, aspartate 176, histidine 178, and glutamate 183 each contribute to the Ca(2+) site. Residues serine 229, serine 244, serine 253, serine 255, and serine 259 each carry the phosphoserine modification. Residues 229 to 260 are disordered; sequence SPPPKDSLRSTPSHGSVSSLNSTGSLSPKHSV. Over residues 241-255 the composition is skewed to low complexity; that stretch reads SHGSVSSLNSTGSLS. 2 EF-hand domains span residues 272-307 and 308-341; these read ADKM…SGLT and QNLL…IQQK. The region spanning 273–363 is the EH 3 domain; the sequence is DKMRFDEIFL…PDMVPPSERG (91 aa). Serine 360 carries the post-translational modification Phosphoserine. Threonine 364 is subject to Phosphothreonine. Residues serine 369 and serine 375 each carry the phosphoserine modification. Residues 384–551 adopt a coiled-coil conformation; that stretch reads LDDISQEIAQ…RSKLSQLQES (168 aa). At serine 558 the chain carries Phosphoserine. A Phosphotyrosine modification is found at tyrosine 562. Serine 610 carries the post-translational modification Phosphoserine. Positions 611 to 860 are disordered; sequence QELHPDPFQA…SSSGFADFTS (250 aa). Residues 622–636 are compositionally biased toward basic and acidic residues; it reads DPFKSDPFKGADPFK. A compositionally biased stretch (polar residues) spans 643–652; sequence DPFSEQQTAA. Phosphoserine occurs at positions 664, 670, 695, 715, and 732. The span at 682 to 696 shows a compositional bias: polar residues; it reads NDPFTSDPFTKNPSL. The segment covering 703–743 has biased composition (low complexity); that stretch reads FESSDPFSSSSISSKGSDPFGTLDPFGSSSFSSAEGFADFS. A compositionally biased stretch (pro residues) spans 776–790; the sequence is ALPPKKPAPPRPKPP. A Phosphoserine modification is found at serine 791. Polar residues predominate over residues 791–802; the sequence is SGQSTPVSQLGS. Phosphothreonine is present on threonine 795. Residues 840–853 show a composition bias toward low complexity; the sequence is APSSSAKPPKTSSS. 2 UIM domains span residues 863 to 882 and 889 to 907; these read NEEQ…EQER and QEQE…DMPA.

In terms of assembly, interacts with EPS15, AGFG1/HRB and AGFG2/HRBL. Associates with the clathrin-associated adapter protein complex 2 (AP-2). Interacts with FCHO1. Interacts with FCHO2. Interacts (via EH domains) with DAB2. Interacts with UBQLN1 (via ubiquitin-like domain). Interacts with CAVIN3 (via leucine-zipper domain). Interacts with REPS2. In terms of processing, phosphorylated on tyrosine residues by EGFR.

It localises to the cell membrane. It is found in the nucleus. The protein resides in the membrane. The protein localises to the coated pit. Functionally, seems to be a constitutive component of clathrin-coated pits that is required for receptor-mediated endocytosis. Involved in endocytosis of integrin beta-1 (ITGB1) and transferrin receptor (TFR); internalization of ITGB1 as DAB2-dependent cargo but not TFR seems to require association with DAB2. The protein is Epidermal growth factor receptor substrate 15-like 1 (Eps15l1) of Mus musculus (Mouse).